Reading from the N-terminus, the 360-residue chain is Photosystem II protein D1 2 (360 aa).

3 consecutive transmembrane segments (helical) span residues 29-46 (YVGW…TATT), 118-133 (HFLI…EWEL), and 142-156 (WICV…AATA). His118 is a binding site for chlorophyll a. Tyr126 lines the pheophytin a pocket. 2 residues coordinate [CaMn4O5] cluster: Asp170 and Glu189. Residues 197-218 (FHMLGVAGVFGGSLFSAMHGSL) form a helical membrane-spanning segment. Chlorophyll a is bound at residue His198. A quinone is bound by residues His215 and 264 to 265 (SF). His215 contributes to the Fe cation binding site. His272 contacts Fe cation. Residues 274-288 (FLGAWPVVGIWFTAL) traverse the membrane as a helical segment. Positions 332, 333, 342, and 344 each coordinate [CaMn4O5] cluster. Positions 345-360 (AGEQAPVALQAPAING) are excised as a propeptide.

It belongs to the reaction center PufL/M/PsbA/D family. PSII is composed of 1 copy each of membrane proteins PsbA, PsbB, PsbC, PsbD, PsbE, PsbF, PsbH, PsbI, PsbJ, PsbK, PsbL, PsbM, PsbT, PsbX, PsbY, PsbZ, Psb30/Ycf12, peripheral proteins PsbO, CyanoQ (PsbQ), PsbU, PsbV and a large number of cofactors. It forms dimeric complexes. The cofactor is The D1/D2 heterodimer binds P680, chlorophylls that are the primary electron donor of PSII, and subsequent electron acceptors. It shares a non-heme iron and each subunit binds pheophytin, quinone, additional chlorophylls, carotenoids and lipids. D1 provides most of the ligands for the Mn4-Ca-O5 cluster of the oxygen-evolving complex (OEC). There is also a Cl(-1) ion associated with D1 and D2, which is required for oxygen evolution. The PSII complex binds additional chlorophylls, carotenoids and specific lipids.. Tyr-161 forms a radical intermediate that is referred to as redox-active TyrZ, YZ or Y-Z. Post-translationally, C-terminally processed by CtpA; processing is essential to allow assembly of the oxygen-evolving complex and thus photosynthetic growth.

The protein resides in the cellular thylakoid membrane. The catalysed reaction is 2 a plastoquinone + 4 hnu + 2 H2O = 2 a plastoquinol + O2. Functionally, photosystem II (PSII) is a light-driven water:plastoquinone oxidoreductase that uses light energy to abstract electrons from H(2)O, generating O(2) and a proton gradient subsequently used for ATP formation. It consists of a core antenna complex that captures photons, and an electron transfer chain that converts photonic excitation into a charge separation. The D1/D2 (PsbA/PsbD) reaction center heterodimer binds P680, the primary electron donor of PSII as well as several subsequent electron acceptors. This Picosynechococcus sp. (strain ATCC 27264 / PCC 7002 / PR-6) (Agmenellum quadruplicatum) protein is Photosystem II protein D1 2.